Reading from the N-terminus, the 379-residue chain is Cytochrome b (379 aa).

4 helical membrane passes run 33 to 53 (FGSL…FLAM), 77 to 98 (WTIR…FIHV), 113 to 133 (WNIG…GYVL), and 178 to 198 (FFAL…IHLL). Heme b contacts are provided by histidine 83 and histidine 97. Heme b-binding residues include histidine 182 and histidine 196. Histidine 201 contacts a ubiquinone. 4 helical membrane-spanning segments follow: residues 226–246 (TKDF…TLFY), 288–308 (PGGV…PFLQ), 320–340 (LSQF…WIGG), and 347–367 (FISI…FIMP).

It belongs to the cytochrome b family. In terms of assembly, the cytochrome bc1 complex contains 11 subunits: 3 respiratory subunits (MT-CYB, CYC1 and UQCRFS1), 2 core proteins (UQCRC1 and UQCRC2) and 6 low-molecular weight proteins (UQCRH/QCR6, UQCRB/QCR7, UQCRQ/QCR8, UQCR10/QCR9, UQCR11/QCR10 and a cleavage product of UQCRFS1). This cytochrome bc1 complex then forms a dimer. Heme b serves as cofactor.

The protein resides in the mitochondrion inner membrane. Component of the ubiquinol-cytochrome c reductase complex (complex III or cytochrome b-c1 complex) that is part of the mitochondrial respiratory chain. The b-c1 complex mediates electron transfer from ubiquinol to cytochrome c. Contributes to the generation of a proton gradient across the mitochondrial membrane that is then used for ATP synthesis. This is Cytochrome b (MT-CYB) from Lepilemur ruficaudatus (Red-tailed sportive lemur).